The primary structure comprises 101 residues: uncharacterized protein (101 aa).

2 helical membrane passes run 10-30 (VLAI…IGSI) and 67-87 (IILG…ILSI).

The protein resides in the membrane. This is an uncharacterized protein from Acanthamoeba polyphaga (Amoeba).